A 242-amino-acid chain; its full sequence is 1-(5-phosphoribosyl)-5-[(5-phosphoribosylamino)methylideneamino] imidazole-4-carboxamide isomerase (242 aa).

The active-site Proton acceptor is the D8. D129 acts as the Proton donor in catalysis.

This sequence belongs to the HisA/HisF family.

Its subcellular location is the cytoplasm. The catalysed reaction is 1-(5-phospho-beta-D-ribosyl)-5-[(5-phospho-beta-D-ribosylamino)methylideneamino]imidazole-4-carboxamide = 5-[(5-phospho-1-deoxy-D-ribulos-1-ylimino)methylamino]-1-(5-phospho-beta-D-ribosyl)imidazole-4-carboxamide. It participates in amino-acid biosynthesis; L-histidine biosynthesis; L-histidine from 5-phospho-alpha-D-ribose 1-diphosphate: step 4/9. This Beijerinckia indica subsp. indica (strain ATCC 9039 / DSM 1715 / NCIMB 8712) protein is 1-(5-phosphoribosyl)-5-[(5-phosphoribosylamino)methylideneamino] imidazole-4-carboxamide isomerase.